Consider the following 351-residue polypeptide: sn-glycerol-3-phosphate import ATP-binding protein UgpC (351 aa).

An ABC transporter domain is found at 4-235; it reads IVLDNVRKSY…PASTFVATFI (232 aa). 37-44 contributes to the ATP binding site; it reads GPSGCGKS.

This sequence belongs to the ABC transporter superfamily. sn-glycerol-3-phosphate importer (TC 3.A.1.1.3) family. As to quaternary structure, the complex is composed of two ATP-binding proteins (UgpC), two transmembrane proteins (UgpA and UgpE) and a solute-binding protein (UgpB).

Its subcellular location is the cell inner membrane. The enzyme catalyses sn-glycerol 3-phosphate(out) + ATP + H2O = sn-glycerol 3-phosphate(in) + ADP + phosphate + H(+). Part of the ABC transporter complex UgpBAEC involved in sn-glycerol-3-phosphate (G3P) import. Responsible for energy coupling to the transport system. The polypeptide is sn-glycerol-3-phosphate import ATP-binding protein UgpC (Brucella abortus biovar 1 (strain 9-941)).